Consider the following 117-residue polypeptide: Large ribosomal subunit protein bL20c (117 aa).

This sequence belongs to the bacterial ribosomal protein bL20 family.

It localises to the plastid. It is found in the chloroplast. In terms of biological role, binds directly to 23S ribosomal RNA and is necessary for the in vitro assembly process of the 50S ribosomal subunit. It is not involved in the protein synthesizing functions of that subunit. In Populus trichocarpa (Western balsam poplar), this protein is Large ribosomal subunit protein bL20c.